Consider the following 618-residue polypeptide: Baculoviral IAP repeat-containing protein 2 (618 aa).

3 BIR repeats span residues 46 to 113 (ELYR…CSFI), 184 to 250 (EEAR…CPFL), and 269 to 336 (HAAR…CEFL). Zn(2+) is bound by residues Cys-306, Cys-309, His-326, and Cys-333. The 91-residue stretch at 453–543 (MASDDLSLIR…TLYKNLFVDK (91 aa)) folds into the CARD domain. An RING-type zinc finger spans residues 571-606 (CKVCMDKEVSVVFIPCGHLVVCQECAPSLRKCPICR).

It belongs to the IAP family. Interacts with DIABLO/SMAC and with PRSS25; these interactions inhibit apoptotic suppressor activity. Interacts with CASP9. Interacts (via BIR domains) with TRAF2; the interaction is required for IKBKE ubiquitination. Interacts with E2F1, RIPK1, RIPK2, RIPK3, RIPK4, BIRC5/survivin and USP19. HSP90AB1. Interacts with UBXN1. Interacts with GSK3B. Interacts with several death receptors, inclusing FAS, TNFRSF10A and TNFRSF10B. Recruited to TNFRSF10B in the absence of receptor stimulation. When TNFRSF10B is stimulated, further recruited to the receptor and cleaved by caspases. Proteolytic fragments remain associated with TNFRSF10B. In terms of processing, auto-ubiquitinated and degraded by the proteasome in apoptotic cells. Upon stimulation of death receptors, including TNFRSF10B, recruited to receptors and cleaved by caspases. Proteolytic fragments remain associated with the receptors. This cleavage presumably inactivates the protein. In terms of tissue distribution, present in many fetal and adult tissues. Mainly expressed in adult skeletal muscle, thymus, testis, ovary, and pancreas, low or absent in brain and peripheral blood leukocytes.

The protein resides in the cytoplasm. It is found in the nucleus. It catalyses the reaction S-ubiquitinyl-[E2 ubiquitin-conjugating enzyme]-L-cysteine + [acceptor protein]-L-lysine = [E2 ubiquitin-conjugating enzyme]-L-cysteine + N(6)-ubiquitinyl-[acceptor protein]-L-lysine.. With respect to regulation, the CARD domain inhibits the activation of E3 ubiquitin ligase activity by preventing RING domain dimerization and E2 ubiquitin donor binding and activation. The CARD domain-mediated autoinhibition of the E3 ubiquitin-protein ligase activity suppresses cell proliferation and migration. USP19 regulates the stability of BIRC2/c-IAP1 by preventing its ubiquitination. In terms of biological role, multi-functional protein which regulates not only caspases and apoptosis, but also modulates inflammatory signaling and immunity, mitogenic kinase signaling, and cell proliferation, as well as cell invasion and metastasis. Acts as an E3 ubiquitin-protein ligase regulating NF-kappa-B signaling and regulates both canonical and non-canonical NF-kappa-B signaling by acting in opposite directions: acts as a positive regulator of the canonical pathway and suppresses constitutive activation of non-canonical NF-kappa-B signaling. The target proteins for its E3 ubiquitin-protein ligase activity include: RIPK1, RIPK2, RIPK3, RIPK4, CASP3, CASP7, CASP8, TRAF2, DIABLO/SMAC, MAP3K14/NIK, MAP3K5/ASK1, IKBKG/NEMO, IKBKE and MXD1/MAD1. Can also function as an E3 ubiquitin-protein ligase of the NEDD8 conjugation pathway, targeting effector caspases for neddylation and inactivation. Acts as an important regulator of innate immune signaling via regulation of Toll-like receptors (TLRs), Nodlike receptors (NLRs) and RIG-I like receptors (RLRs), collectively referred to as pattern recognition receptors (PRRs). Protects cells from spontaneous formation of the ripoptosome, a large multi-protein complex that has the capability to kill cancer cells in a caspase-dependent and caspase-independent manner. Suppresses ripoptosome formation by ubiquitinating RIPK1 and CASP8. Can stimulate the transcriptional activity of E2F1. Plays a role in the modulation of the cell cycle. The sequence is that of Baculoviral IAP repeat-containing protein 2 (BIRC2) from Homo sapiens (Human).